Consider the following 189-residue polypeptide: Flavin prenyltransferase UbiX (189 aa).

FMN contacts are provided by residues 10–12, Ser37, 88–91, and Arg123; these read GAS and SIKT. Dimethylallyl phosphate contacts are provided by Tyr153 and Arg169.

It belongs to the UbiX/PAD1 family.

The catalysed reaction is dimethylallyl phosphate + FMNH2 = prenylated FMNH2 + phosphate. Its pathway is cofactor biosynthesis; ubiquinone biosynthesis. Flavin prenyltransferase that catalyzes the synthesis of the prenylated FMN cofactor (prenyl-FMN) for 4-hydroxy-3-polyprenylbenzoic acid decarboxylase UbiD. The prenyltransferase is metal-independent and links a dimethylallyl moiety from dimethylallyl monophosphate (DMAP) to the flavin N5 and C6 atoms of FMN. The chain is Flavin prenyltransferase UbiX from Escherichia coli O157:H7.